Reading from the N-terminus, the 156-residue chain is Small ribosomal subunit protein uS7 (156 aa).

It belongs to the universal ribosomal protein uS7 family. In terms of assembly, part of the 30S ribosomal subunit. Contacts proteins S9 and S11.

In terms of biological role, one of the primary rRNA binding proteins, it binds directly to 16S rRNA where it nucleates assembly of the head domain of the 30S subunit. Is located at the subunit interface close to the decoding center, probably blocks exit of the E-site tRNA. The chain is Small ribosomal subunit protein uS7 from Clostridium botulinum (strain Okra / Type B1).